A 94-amino-acid polypeptide reads, in one-letter code: Secretoglobin family 1C member 1 (94 aa).

Positions 1–22 are cleaved as a signal peptide; that stretch reads MKGSSALLVALTVLCICGLTRA.

Belongs to the secretoglobin family. In terms of tissue distribution, expressed in the olfactory mucosa.

It localises to the secreted. In Rattus norvegicus (Rat), this protein is Secretoglobin family 1C member 1 (Scgb1c1).